A 684-amino-acid chain; its full sequence is Sec1 family domain-containing protein 2 (684 aa).

The protein belongs to the STXBP/unc-18/SEC1 family.

Functionally, may be involved in protein transport. The sequence is that of Sec1 family domain-containing protein 2 (SCFD2) from Homo sapiens (Human).